Consider the following 256-residue polypeptide: Enkurin (256 aa).

The short motif at Pro-83–Pro-89 is the SH3-binding element. The 93-residue stretch at Lys-160–Ile-252 folds into the Enkurin domain. Residues Lys-160 to Asn-255 are interaction with TRPC proteins. The region spanning Ile-176–Arg-187 is the IQ domain.

In terms of assembly, microtubule inner protein component of sperm flagellar doublet microtubules. Binds calmodulin via its IQ domain. Interacts with TRPC1, TRPC2, TRPC5, but not TRPC3. Interacts with CFAP45. In terms of tissue distribution, expressed in airway epithelial cells.

The protein resides in the cytoplasm. The protein localises to the cytoskeleton. It is found in the cilium axoneme. It localises to the flagellum axoneme. Adapter that functions to localize a calcium-sensitive signal transduction machinery in sperm to a calcium-permeable ion channel. Microtubule inner protein (MIP) part of the dynein-decorated doublet microtubules (DMTs) in cilia axoneme, which is required for motile cilia beating. The protein is Enkurin of Homo sapiens (Human).